The following is a 248-amino-acid chain: UDP-2,3-diacylglucosamine hydrolase (248 aa).

5 residues coordinate Mn(2+): Asp7, His9, Asp40, Asn78, and His113. Residue 78–79 (NR) participates in substrate binding. The substrate site is built by Asp121, Ser159, Thr163, Lys166, and His194. Mn(2+) contacts are provided by His194 and His196.

This sequence belongs to the LpxH family. Mn(2+) serves as cofactor.

The protein localises to the cell inner membrane. The enzyme catalyses UDP-2-N,3-O-bis[(3R)-3-hydroxytetradecanoyl]-alpha-D-glucosamine + H2O = 2-N,3-O-bis[(3R)-3-hydroxytetradecanoyl]-alpha-D-glucosaminyl 1-phosphate + UMP + 2 H(+). It participates in glycolipid biosynthesis; lipid IV(A) biosynthesis; lipid IV(A) from (3R)-3-hydroxytetradecanoyl-[acyl-carrier-protein] and UDP-N-acetyl-alpha-D-glucosamine: step 4/6. In terms of biological role, hydrolyzes the pyrophosphate bond of UDP-2,3-diacylglucosamine to yield 2,3-diacylglucosamine 1-phosphate (lipid X) and UMP by catalyzing the attack of water at the alpha-P atom. Involved in the biosynthesis of lipid A, a phosphorylated glycolipid that anchors the lipopolysaccharide to the outer membrane of the cell. The polypeptide is UDP-2,3-diacylglucosamine hydrolase (Pseudomonas syringae pv. tomato (strain ATCC BAA-871 / DC3000)).